Consider the following 336-residue polypeptide: Tryptophan--tRNA ligase (336 aa).

Residues 15-17 and 24-25 each bind ATP; these read QPT and GN. The short motif at 16-25 is the 'HIGH' region element; the sequence is PTSDSLHLGN. Residue aspartate 141 coordinates L-tryptophan. ATP is bound by residues 153–155, isoleucine 192, and 201–205; these read GED and KMSKS. Residues 201–205 carry the 'KMSKS' region motif; that stretch reads KMSKS.

Belongs to the class-I aminoacyl-tRNA synthetase family. As to quaternary structure, homodimer.

It is found in the cytoplasm. It carries out the reaction tRNA(Trp) + L-tryptophan + ATP = L-tryptophyl-tRNA(Trp) + AMP + diphosphate + H(+). Its function is as follows. Catalyzes the attachment of tryptophan to tRNA(Trp). This Mycobacterium tuberculosis (strain CDC 1551 / Oshkosh) protein is Tryptophan--tRNA ligase.